Here is a 201-residue protein sequence, read N- to C-terminus: UPF0323 lipoprotein Cj0371 (201 aa).

A signal peptide spans 1 to 26 (MKKIKKIIQIGMIGGLAAVAGGALAG). Cysteine 27 carries N-palmitoyl cysteine lipidation. Cysteine 27 is lipidated: S-diacylglycerol cysteine. Residues 169–201 (NKAGTTSSASSAKKSGFFGGGSKATSSSSSFGS) are disordered. Composition is skewed to low complexity over residues 170–184 (KAGT…KKSG) and 191–201 (KATSSSSSFGS).

Belongs to the UPF0323 family.

It is found in the cell membrane. In Campylobacter jejuni subsp. jejuni serotype O:2 (strain ATCC 700819 / NCTC 11168), this protein is UPF0323 lipoprotein Cj0371.